Consider the following 82-residue polypeptide: MAHSVTPLQWVAVKLIRLYQLIISPLLGQRCRFTPTCSQFAIEAIRLHGFIKGVWLASKRLLKCHPLSEGGYDPVPQPKRRN.

This sequence belongs to the UPF0161 family.

It is found in the cell inner membrane. Functionally, could be involved in insertion of integral membrane proteins into the membrane. This chain is Putative membrane protein insertion efficiency factor, found in Aeromonas salmonicida (strain A449).